We begin with the raw amino-acid sequence, 476 residues long: MAISAPAACSSSSRILCSYSSPSPSLCPAISTSGKLKTLTLSSSFLPSYSLTTTSASQSTRRSFTVRAARGKFERKKPHVNIGTIGHVDHGKTTLTAALTMALASIGSSVAKKYDEIDAAPEERARGITINTATVEYETENRHYAHVDCPGHADYVKNMITGAAQMDGAILVVSGADGPMPQTKEHILLAKQVGVPDMVVFLNKEDQVDDAELLELVELEVRELLSSYEFNGDDIPIISGSALLAVETLTENPKVKRGDNKWVDKIYELMDAVDDYIPIPQRQTELPFLLAVEDVFSITGRGTVATGRVERGTVKVGETVDLVGLRETRSYTVTGVEMFQKILDEALAGDNVGLLLRGIQKADIQRGMVLAKPGSITPHTKFEAIIYVLKKEEGGRHSPFFAGYRPQFYMRTTDVTGKVTKIMNDKDEESKMVMPGDRVKIVVELIVPVACEQGMRFAIREGGKTVGAGVIGTILE.

The N-terminal 67 residues, 1 to 67 (MAISAPAACS…QSTRRSFTVR (67 aa)), are a transit peptide targeting the chloroplast. The region spanning 77 to 281 (KPHVNIGTIG…AVDDYIPIPQ (205 aa)) is the tr-type G domain. The segment at 86-93 (GHVDHGKT) is G1. A GTP-binding site is contributed by 86 to 93 (GHVDHGKT). Thr-94 is subject to Phosphothreonine. The interval 127–131 (GITIN) is G2. The segment at 148–151 (DCPG) is G3. Residues 148 to 152 (DCPGH) and 203 to 206 (NKED) contribute to the GTP site. A G4 region spans residues 203–206 (NKED). A G5 region spans residues 241–243 (SAL).

This sequence belongs to the TRAFAC class translation factor GTPase superfamily. Classic translation factor GTPase family. EF-Tu/EF-1A subfamily. In terms of assembly, interacts with PI5K2. Interacts with APD2.

Its subcellular location is the plastid. The protein localises to the chloroplast. In terms of biological role, this protein promotes the GTP-dependent binding of aminoacyl-tRNA to the A-site of ribosomes during protein biosynthesis. This is Elongation factor Tu, chloroplastic (TUFA) from Arabidopsis thaliana (Mouse-ear cress).